Consider the following 92-residue polypeptide: Small ribosomal subunit protein uS19 (92 aa).

It belongs to the universal ribosomal protein uS19 family.

Its function is as follows. Protein S19 forms a complex with S13 that binds strongly to the 16S ribosomal RNA. This Corynebacterium jeikeium (strain K411) protein is Small ribosomal subunit protein uS19.